The primary structure comprises 359 residues: 3-dehydroquinate synthase (359 aa).

NAD(+) is bound by residues 69-74 (DAETGK), 103-107 (GAATD), 127-128 (TT), Lys-140, and Lys-149. Zn(2+) is bound by residues Glu-182, His-244, and His-260.

It belongs to the sugar phosphate cyclases superfamily. Dehydroquinate synthase family. Co(2+) serves as cofactor. The cofactor is Zn(2+). NAD(+) is required as a cofactor.

The protein resides in the cytoplasm. The catalysed reaction is 7-phospho-2-dehydro-3-deoxy-D-arabino-heptonate = 3-dehydroquinate + phosphate. It functions in the pathway metabolic intermediate biosynthesis; chorismate biosynthesis; chorismate from D-erythrose 4-phosphate and phosphoenolpyruvate: step 2/7. Functionally, catalyzes the conversion of 3-deoxy-D-arabino-heptulosonate 7-phosphate (DAHP) to dehydroquinate (DHQ). The sequence is that of 3-dehydroquinate synthase from Corynebacterium diphtheriae (strain ATCC 700971 / NCTC 13129 / Biotype gravis).